Consider the following 441-residue polypeptide: tRNA modification GTPase MnmE (441 aa).

3 residues coordinate (6S)-5-formyl-5,6,7,8-tetrahydrofolate: R22, E80, and K118. Positions G213–E366 constitute a TrmE-type G domain. GTP contacts are provided by residues N223 to T228, S242 to T248, and D267 to G270. Mg(2+) contacts are provided by S227 and T248. K441 provides a ligand contact to (6S)-5-formyl-5,6,7,8-tetrahydrofolate.

The protein belongs to the TRAFAC class TrmE-Era-EngA-EngB-Septin-like GTPase superfamily. TrmE GTPase family. In terms of assembly, homodimer. Heterotetramer of two MnmE and two MnmG subunits. The cofactor is K(+).

Its subcellular location is the cytoplasm. Functionally, exhibits a very high intrinsic GTPase hydrolysis rate. Involved in the addition of a carboxymethylaminomethyl (cmnm) group at the wobble position (U34) of certain tRNAs, forming tRNA-cmnm(5)s(2)U34. In Ehrlichia canis (strain Jake), this protein is tRNA modification GTPase MnmE.